We begin with the raw amino-acid sequence, 277 residues long: Formamidopyrimidine-DNA glycosylase (277 aa).

Pro2 functions as the Schiff-base intermediate with DNA in the catalytic mechanism. The active-site Proton donor is the Glu3. Residue Lys58 is the Proton donor; for beta-elimination activity of the active site. Positions 94, 113, and 156 each coordinate DNA. The FPG-type zinc-finger motif lies at 241 to 277 (LVYGREGVPCPNCGAEHPIQRITQAGRSTFFCPTCQK). Arg267 (proton donor; for delta-elimination activity) is an active-site residue.

The protein belongs to the FPG family. In terms of assembly, monomer. Requires Zn(2+) as cofactor.

The catalysed reaction is Hydrolysis of DNA containing ring-opened 7-methylguanine residues, releasing 2,6-diamino-4-hydroxy-5-(N-methyl)formamidopyrimidine.. It catalyses the reaction 2'-deoxyribonucleotide-(2'-deoxyribose 5'-phosphate)-2'-deoxyribonucleotide-DNA = a 3'-end 2'-deoxyribonucleotide-(2,3-dehydro-2,3-deoxyribose 5'-phosphate)-DNA + a 5'-end 5'-phospho-2'-deoxyribonucleoside-DNA + H(+). Functionally, involved in base excision repair of DNA damaged by oxidation or by mutagenic agents. Acts as a DNA glycosylase that recognizes and removes damaged bases. Has a preference for oxidized purines, such as 7,8-dihydro-8-oxoguanine (8-oxoG). Has AP (apurinic/apyrimidinic) lyase activity and introduces nicks in the DNA strand. Cleaves the DNA backbone by beta-delta elimination to generate a single-strand break at the site of the removed base with both 3'- and 5'-phosphates. The polypeptide is Formamidopyrimidine-DNA glycosylase (Gluconobacter oxydans (strain 621H) (Gluconobacter suboxydans)).